A 429-amino-acid polypeptide reads, in one-letter code: Multifunctional CCA protein (429 aa).

ATP contacts are provided by G27 and R30. Residues G27 and R30 each coordinate CTP. The Mg(2+) site is built by D40 and D42. R110, R162, and R165 together coordinate ATP. Residues R110, R162, and R165 each contribute to the CTP site. The HD domain occupies 251 to 352 (TGVHTMMVVD…VRLLERCDAL (102 aa)).

It belongs to the tRNA nucleotidyltransferase/poly(A) polymerase family. Bacterial CCA-adding enzyme type 1 subfamily. As to quaternary structure, monomer. Can also form homodimers and oligomers. Mg(2+) serves as cofactor. The cofactor is Ni(2+).

The catalysed reaction is a tRNA precursor + 2 CTP + ATP = a tRNA with a 3' CCA end + 3 diphosphate. It carries out the reaction a tRNA with a 3' CCA end + 2 CTP + ATP = a tRNA with a 3' CCACCA end + 3 diphosphate. In terms of biological role, catalyzes the addition and repair of the essential 3'-terminal CCA sequence in tRNAs without using a nucleic acid template. Adds these three nucleotides in the order of C, C, and A to the tRNA nucleotide-73, using CTP and ATP as substrates and producing inorganic pyrophosphate. tRNA 3'-terminal CCA addition is required both for tRNA processing and repair. Also involved in tRNA surveillance by mediating tandem CCA addition to generate a CCACCA at the 3' terminus of unstable tRNAs. While stable tRNAs receive only 3'-terminal CCA, unstable tRNAs are marked with CCACCA and rapidly degraded. The protein is Multifunctional CCA protein of Ralstonia nicotianae (strain ATCC BAA-1114 / GMI1000) (Ralstonia solanacearum).